Consider the following 360-residue polypeptide: Peptide chain release factor 1 (360 aa).

Gln237 is subject to N5-methylglutamine.

Belongs to the prokaryotic/mitochondrial release factor family. In terms of processing, methylated by PrmC. Methylation increases the termination efficiency of RF1.

Its subcellular location is the cytoplasm. Peptide chain release factor 1 directs the termination of translation in response to the peptide chain termination codons UAG and UAA. In Pseudomonas putida (strain GB-1), this protein is Peptide chain release factor 1.